The following is a 1182-amino-acid chain: Exocyst complex component 4 (1182 aa).

Positions 236 to 250 (NKNSNSNNSNNTFKS) are enriched in low complexity. 4 disordered regions span residues 236–262 (NKNSNSNNSNNTFKSPLPPTTTSPFKP), 376–427 (IPKM…SSNI), 525–545 (EETEGGGGDSDNDFEGTPKPT), and 921–968 (QQQQ…GSNN). Residues 392–409 (GSNGGGNNSMNGSGGING) show a composition bias toward gly residues. The span at 410 to 426 (NGSTASSSSPTSSTSSN) shows a compositional bias: low complexity. Positions 921–932 (QQQQQQQQQQQQ) are enriched in low complexity. The segment covering 933 to 968 (VDSIKTPSKLNSGINSGGNSTASNKENNSTTTGSNN) has biased composition (polar residues).

It belongs to the SEC8 family. As to quaternary structure, the exocyst complex is composed of sec3/exoc1, sec5/exoc2, sec6/exoc3, sec8/exoc4, sec10/exoc5, sec15/exoc6, exo70/exoc7 and exo84/exoc8.

Its subcellular location is the midbody. It is found in the midbody ring. It localises to the cell projection. The protein localises to the cytoplasm. The protein resides in the cytoskeleton. Its subcellular location is the microtubule organizing center. It is found in the centrosome. In terms of biological role, component of the exocyst complex involved in the docking of exocytic vesicles with fusion sites on the plasma membrane. The polypeptide is Exocyst complex component 4 (exoc4) (Dictyostelium discoideum (Social amoeba)).